Here is a 121-residue protein sequence, read N- to C-terminus: Histone H2B.6 (121 aa).

Residues 1–28 (MAPKAEKKPKVEKRVPGKEGETSKKKAK) form a disordered region. N6-acetyllysine occurs at positions 7 and 13.

The protein belongs to the histone H2B family. In terms of assembly, the nucleosome is a histone octamer containing two molecules each of H2A, H2B, H3 and H4 assembled in one H3-H4 heterotetramer and two H2A-H2B heterodimers. The octamer wraps approximately 147 bp of DNA. Post-translationally, can be acetylated to form H2BK6ac and H2BK33ac. As to expression, expressed preferentially in meristematic tissues.

It localises to the nucleus. Its subcellular location is the chromosome. Core component of nucleosome. Nucleosomes wrap and compact DNA into chromatin, limiting DNA accessibility to the cellular machineries which require DNA as a template. Histones thereby play a central role in transcription regulation, DNA repair, DNA replication and chromosomal stability. DNA accessibility is regulated via a complex set of post-translational modifications of histones, also called histone code, and nucleosome remodeling. The chain is Histone H2B.6 (TH123) from Triticum aestivum (Wheat).